Here is a 382-residue protein sequence, read N- to C-terminus: Transcription factor MYB104 (382 aa).

2 HTH myb-type domains span residues 13–69 (KKTF…KPSL) and 70–120 (KKGP…MRLK). 2 DNA-binding regions (H-T-H motif) span residues 41–65 (WTHV…MNHL) and 93–116 (WSQM…NARR). Positions 326-364 (IPKTDTSSESQLFQSSLRSHTDATPDIANTTGYVGSNER) are disordered. 2 stretches are compositionally biased toward polar residues: residues 329–343 (TDTS…SSLR) and 352–364 (IANT…SNER).

The protein resides in the nucleus. This is Transcription factor MYB104 (MYB104) from Arabidopsis thaliana (Mouse-ear cress).